We begin with the raw amino-acid sequence, 234 residues long: Leucyl/phenylalanyl-tRNA--protein transferase (234 aa).

It belongs to the L/F-transferase family.

It is found in the cytoplasm. It carries out the reaction N-terminal L-lysyl-[protein] + L-leucyl-tRNA(Leu) = N-terminal L-leucyl-L-lysyl-[protein] + tRNA(Leu) + H(+). The enzyme catalyses N-terminal L-arginyl-[protein] + L-leucyl-tRNA(Leu) = N-terminal L-leucyl-L-arginyl-[protein] + tRNA(Leu) + H(+). The catalysed reaction is L-phenylalanyl-tRNA(Phe) + an N-terminal L-alpha-aminoacyl-[protein] = an N-terminal L-phenylalanyl-L-alpha-aminoacyl-[protein] + tRNA(Phe). In terms of biological role, functions in the N-end rule pathway of protein degradation where it conjugates Leu, Phe and, less efficiently, Met from aminoacyl-tRNAs to the N-termini of proteins containing an N-terminal arginine or lysine. The chain is Leucyl/phenylalanyl-tRNA--protein transferase from Nitrosomonas eutropha (strain DSM 101675 / C91 / Nm57).